The sequence spans 263 residues: Norsolorinic acid ketoreductase stcE (263 aa).

NADP(+) is bound by residues Leu-29, Asp-76, Asn-105, Tyr-177, Lys-181, Ile-208, and Ser-210. Tyr-177 acts as the Proton donor in catalysis. The active-site Lowers pKa of active site Tyr is the Lys-181.

The protein belongs to the short-chain dehydrogenases/reductases (SDR) family.

It carries out the reaction (1'S)-averantin + NADP(+) = norsolorinic acid + NADPH + H(+). It participates in mycotoxin biosynthesis; sterigmatocystin biosynthesis. Its function is as follows. Short chain dehydrogenase; part of the gene cluster that mediates the biosynthesis of sterigmatocystin (ST), a polyketide-derived furanocoumarin which is part of the most toxic and carcinogenic compounds among the known mycotoxins. The first step in the biosynthesis of sterigmatocystin is the production of hexanoate by the fatty acid synthase (FAS) units stcJ and stcK. The polyketide backbone is assembled by the non-reducing polyketide synthase stcA by condensation of the starter hexanoyl-CoA and 7 malonyl-CoA extender units followed by cyclization and release of norsolorinic acid. Norsolorinic acid is the first stable intermediate in the biosynthesis of sterigmatocystin and is converted into averantin (AVN) by the ketoreductase stcE which reduces the hexanoate ketone to an alcohol. Averantin is then oxidized into 5'-hydroxyaverantin (HAVN) by the cytochrome P450 monooxygenase stcF. 5'-hydroxyaverantin is further converted to 5'-oxyaverantin (OAVN) by the 5'-hydroxyaverantin dehydrogenase stcG. The next step is the conversion of OAVN into averufin (AVF) which is catalyzed by a yet to be identified enzyme. The cytochrome P450 monooxygenase stcB and the flavin-binding monooxygenase stcW are both required for the conversion of averufin to 1-hydroxyversicolorone. The esterase stcI probably catalyzes the formation of versiconal hemiacetal acetate from 1-hydroxyversicolorone. The oxydoreductase stcN then probably catalyzes the biosynthetic step from versiconal to versicolorin B (VERB). The next step is performed by the versicolorin B desaturase stcL to produce versicolorin A (VERA). The ketoreductase stcU and the cytochrome P450 monooxygenase stcS are involved in the conversion of versicolorin A to demethylsterigmatocystin. The Baeyer-Villiger oxidas stcQ and the reductase stcR might be involved in the biosynthetic step from versicolorin A to demethylsterigmatocystin. The final step in the biosynthesis of sterigmatocystin is the methylation of demethylsterigmatocystin catalyzed by the methyltransferase stcP. This Emericella nidulans (strain FGSC A4 / ATCC 38163 / CBS 112.46 / NRRL 194 / M139) (Aspergillus nidulans) protein is Norsolorinic acid ketoreductase stcE.